We begin with the raw amino-acid sequence, 352 residues long: Sphingosine 1-phosphate receptor 2 (352 aa).

At 1 to 34 the chain is on the extracellular side; that stretch reads MGGLYSEYLNPEKVLEHYNYTKETLDMQETTSRK. Asn19 is a glycosylation site (N-linked (GlcNAc...) asparagine). Residues 35–59 traverse the membrane as a helical segment; the sequence is VASAFIIILCCAIVVENLLVLIAVA. Topologically, residues 60–66 are cytoplasmic; that stretch reads RNSKFHS. The helical transmembrane segment at 67-95 threads the bilayer; the sequence is AMYLFLGNLAASDLLAGVAFVANTLLSGH. At 96-109 the chain is on the extracellular side; sequence VTLSLTPVQWFARE. A helical transmembrane segment spans residues 110 to 128; it reads GSAFITLSASVFSLLAIAI. The Cytoplasmic segment spans residues 129-147; sequence ERQVALAKVKLYGSDKSCR. Residues 148–173 form a helical membrane-spanning segment; it reads MLMLIGASWLISLILGGLPILGWNCL. Over 174-189 the chain is Extracellular; sequence NQLEACSTVLPLYAKH. A helical membrane pass occupies residues 190–210; sequence YVLCVVTIFSVILLAIVALYV. At 211 to 233 the chain is on the cytoplasmic side; sequence RIYFVVRSSHADVAGPQTLALLK. The chain crosses the membrane as a helical span at residues 234-255; it reads TVTIVLGVFIICWLPAFSILLL. At 256–271 the chain is on the extracellular side; it reads DSTCPVRACPVLYKAH. The chain crosses the membrane as a helical span at residues 272–292; the sequence is YFFAFATLNSLLNPVIYTWRS. The Cytoplasmic segment spans residues 293–352; sequence RDLRREVLRPLQCWRRGKGVTGRRGGNPGHRLLPLRSSSSLERGMHMPTSPTFLEGNTVV. A lipid anchor (S-palmitoyl cysteine) is attached at Cys305. Residues 333–352 form a disordered region; that stretch reads LERGMHMPTSPTFLEGNTVV.

This sequence belongs to the G-protein coupled receptor 1 family. In terms of tissue distribution, most abundant in heart and lung; low, but clearly observed in kidney, liver and thymus; much lower but detectable in brain, testis, stomach and intestine. Not significantly detected in any of the sections of embryonic day (E) 14-18, except in embryonic brain.

It is found in the cell membrane. Functionally, receptor for the lysosphingolipid sphingosine 1-phosphate (S1P). S1P is a bioactive lysophospholipid that elicits diverse physiological effects on most types of cells and tissues. Receptor for the chemokine-like protein FAM19A5. Mediates the inhibitory effect of FAM19A5 on vascular smooth muscle cell proliferation and migration. In lymphoid follicles, couples the binding of S1P to the activation of GNA13 and downstream inhibition of AKT activation leading to suppression of germinal center (GC) B cell growth and migration outside the GC niche. The sequence is that of Sphingosine 1-phosphate receptor 2 (S1pr2) from Mus musculus (Mouse).